The following is a 460-amino-acid chain: Gastric inhibitory polypeptide receptor (460 aa).

Positions 1-18 (MPLRLLLLLLWLWGLQWA) are cleaved as a signal peptide. The Extracellular portion of the chain corresponds to 19-134 (ETDSEGQTTT…DQTLILERLQ (116 aa)). Disulfide bonds link cysteine 42–cysteine 66, cysteine 57–cysteine 99, and cysteine 80–cysteine 114. 3 N-linked (GlcNAc...) asparagine glycosylation sites follow: asparagine 58, asparagine 68, and asparagine 73. The helical transmembrane segment at 135 to 155 (IMYTVGYSLSLTTLLLALLIL) threads the bilayer. Topologically, residues 156 to 166 (SLFRRLHCTRN) are cytoplasmic. The helical transmembrane segment at 167–185 (YIHMNLFTSFMLRAAAILT) threads the bilayer. At 186–222 (RDQLLPPLGPYTGDQAPTPWNQALAACRTAQIMTQYC) the chain is on the extracellular side. The helical transmembrane segment at 223–243 (VGANYTWLLVEGVYLHHLLVI) threads the bilayer. Residues 244-255 (VGRSEKGHFRCY) lie on the Cytoplasmic side of the membrane. The chain crosses the membrane as a helical span at residues 256-276 (LLLGWGAPALFVIPWVIVRYL). Over 277–297 (RENTQCWERNEVKAIWWIIRT) the chain is Extracellular. Residues 298 to 318 (PILITILINFLIFIRILGILV) traverse the membrane as a helical segment. Residues 319-337 (SKLRTRQMRCPDYRLRLAR) are Cytoplasmic-facing. Residues 338–358 (STLTLVPLLGVHEVVFAPVTE) form a helical membrane-spanning segment. The Extracellular segment spans residues 359 to 370 (EQVEGSLRFAKL). Residues 371–391 (AFEIFLSSFQGFLVSVLYCFI) form a helical membrane-spanning segment. Topologically, residues 392 to 460 (NKEVQSEIRQ…PGDEVLESYC (69 aa)) are cytoplasmic.

Belongs to the G-protein coupled receptor 2 family. May form homodimers and heterodimers with GLP1R. In terms of processing, N-glycosylation is required for cell surface expression and lengthens receptor half-life by preventing degradation in the ER.

Its subcellular location is the cell membrane. This is a receptor for GIP. The activity of this receptor is mediated by G proteins which activate adenylyl cyclase. The sequence is that of Gastric inhibitory polypeptide receptor (Gipr) from Mus musculus (Mouse).